A 182-amino-acid polypeptide reads, in one-letter code: UPF0301 protein CHU_1773 (182 aa).

It belongs to the UPF0301 (AlgH) family.

This Cytophaga hutchinsonii (strain ATCC 33406 / DSM 1761 / CIP 103989 / NBRC 15051 / NCIMB 9469 / D465) protein is UPF0301 protein CHU_1773.